Here is a 774-residue protein sequence, read N- to C-terminus: Transmembrane GTPase fzo-1 (774 aa).

The tract at residues 1-29 (MSGTASLVHTLPASGDSNHRGLHSLKNSR) is disordered. Topologically, residues 1-617 (MSGTASLVHT…EEQAMMTQMV (617 aa)) are cytoplasmic. Over residues 20-29 (RGLHSLKNSR) the composition is skewed to basic residues. The stretch at 51-71 (YGELKDNVAELEGVYKDIKEN) forms a coiled coil. One can recognise a Dynamin-type G domain in the interval 97–352 (QRDNMKVVFF…TRALEFQNFE (256 aa)). A G1 motif region spans residues 107 to 114 (GRTSNGKS). 110-115 (SNGKST) serves as a coordination point for GTP. The segment at 133–134 (TT) is G2 motif. Residues 211–214 (DSPG) form a G3 motif region. Residue 270-273 (NRWD) participates in GTP binding. The tract at residues 270 to 273 (NRWD) is G4 motif. Position 300 (E300) is a region of interest, G5 motif. Position 317 (S317) interacts with GTP. Residues 385–415 (NLNSVLTSAAEQRSKLQNNLNESTRTFNECR) adopt a coiled-coil conformation. The helical transmembrane segment at 618-638 (LTSAAFLANGSLGVLVVGGIV) threads the bilayer. Topologically, residues 639–640 (YK) are mitochondrial intermembrane. The chain crosses the membrane as a helical span at residues 641–661 (AVGWRVIAVGGAAYAGLYAWE). Residues 662–774 (RMRWNSGAKE…YLRSDSPPTP (113 aa)) lie on the Cytoplasmic side of the membrane.

This sequence belongs to the TRAFAC class dynamin-like GTPase superfamily. Dynamin/Fzo/YdjA family. Mitofusin subfamily. As to quaternary structure, interacts with ced-9; interaction may be suppressed by interaction of ced-9 with egl-1.

Its subcellular location is the mitochondrion outer membrane. The catalysed reaction is GTP + H2O = GDP + phosphate + H(+). Its function is as follows. Probable transmembrane GTPase. Mediates mitochondrial fusion. Fusion of mitochondria occurs in many cell types and constitutes an important step in mitochondria morphology, which is balanced between fusion and fission. Dispensable for normal apoptotic processes during embryonic development. This is Transmembrane GTPase fzo-1 from Caenorhabditis elegans.